The primary structure comprises 614 residues: MAKKNIKQKKDNRIAIDVKKHIKKVDVGVFGGTFVFTSPLSIAELAPKLNKSTNEIIMRYFKKGVVYNLNTILDEEQIGELCLEYDLDFKIEKNVNTENLLENIAFDDLEADLVARAPIVTIMGHVDHGKTTLLDTIRKSSVTASEAGGITQHIGAYQILKGDKPITFIDTPGHEAFTEMRARGANLTDIVILVVAADDGIKMQTEEAIDHAKAANVPIIVFVNKMDKYEANPDKVLNQLSAKEIVAEELGGDIVFVKGSALKNEGIFELLDSILLIAELNDYKANPNRLAYGTTIEANLDKGHGPLATLLVQNGTLRKGDYLVVGSTYGKIRNMFDEYDNEIEMALPSKPVKVSGFEEVPTAGDKFLALADEKQARAIANDVKQKKIRLERSMLQSSDIRAKIANGELKNINLIIKADVQGSLEALKGIFNSINIEGVTTTLVRSAIGTISESDVRLAQTSDAIIIGFNVRANRIIKDLADSVGVQIMNYDIIYKFKEDLEAWMKGTLDPIIVEEVIGEAKVLKLFKHSQVGTICGCRVINGKIKRNALVRVLRDGIVIYNSKIATLQHNKDSVNEVIADKECGLTIANFNDVKENDIIEVYVKVEKNHDEVK.

The 169-residue stretch at 115 to 283 (ARAPIVTIMG…ILLIAELNDY (169 aa)) folds into the tr-type G domain. The tract at residues 124 to 131 (GHVDHGKT) is G1. 124 to 131 (GHVDHGKT) serves as a coordination point for GTP. Positions 149-153 (GITQH) are G2. Residues 170-173 (DTPG) form a G3 region. Residues 170–174 (DTPGH) and 224–227 (NKMD) contribute to the GTP site. The segment at 224–227 (NKMD) is G4. The G5 stretch occupies residues 260 to 262 (SAL).

This sequence belongs to the TRAFAC class translation factor GTPase superfamily. Classic translation factor GTPase family. IF-2 subfamily.

The protein localises to the cytoplasm. One of the essential components for the initiation of protein synthesis. Protects formylmethionyl-tRNA from spontaneous hydrolysis and promotes its binding to the 30S ribosomal subunits. Also involved in the hydrolysis of GTP during the formation of the 70S ribosomal complex. The polypeptide is Translation initiation factor IF-2 (Ureaplasma urealyticum serovar 10 (strain ATCC 33699 / Western)).